A 382-amino-acid chain; its full sequence is Inactive anthranilate O-methyltransferase 1 (382 aa).

Residues Tyr20, Cys61, Asn66, Asp102, Leu103, Ser146, and Tyr147 each coordinate S-adenosyl-L-homocysteine. 2 residues coordinate Mg(2+): Glu268 and Phe270.

It belongs to the methyltransferase superfamily. Type-7 methyltransferase family. SABATH subfamily.

This is Inactive anthranilate O-methyltransferase 1 (AAMT1I) from Zea mays (Maize).